The following is a 461-amino-acid chain: Nuclear distribution protein PAC1 (461 aa).

A coiled-coil region spans residues 64–93; the sequence is NSIIRLHRKILDLEQKCQQLTEELEAVPTE. WD repeat units lie at residues 118 to 157, 161 to 203, 209 to 252, 254 to 292, 318 to 362, 382 to 421, and 423 to 461; these read DVGASVTDIKLHPSLPIAFLATDQGKVVAYDLFNRSMPLH, AHMK…AFQL, SHEH…KSFQ, HNQWVRTLELHGDYVITGSNDATIRLSHWPSGNGLSMAV, DDQV…FIPH, GHTSWVRDIKVRGRHLFSCSDDRSIRCWDLVTGQCLKVWP, and ASHGFINCLSVDSDVSNDKLLRELFLSGSIDGKCNVFMR.

Belongs to the WD repeat LIS1/nudF family. In terms of assembly, self-associates. Interacts with NDL1 and dynein.

The protein localises to the cytoplasm. Its subcellular location is the cytoskeleton. The protein resides in the spindle pole. In terms of biological role, positively regulates the activity of the minus-end directed microtubule motor protein dynein. Plays a central role in positioning the mitotic spindle at the bud neck during cell division. Targets cytoplasmic dynein to microtubule plus ends, thereby promoting dynein-mediated microtubule sliding along the bud cortex and consequently the movement of the mitotic spindle to the bud neck. This is Nuclear distribution protein PAC1 from Eremothecium gossypii (strain ATCC 10895 / CBS 109.51 / FGSC 9923 / NRRL Y-1056) (Yeast).